A 763-amino-acid polypeptide reads, in one-letter code: Dual specificity tyrosine-phosphorylation-regulated kinase 1A (763 aa).

Ser-14 is modified (phosphoserine). The segment at 33–56 is disordered; it reads QMPHSHQYSDRRQPNISDQQVSAL. Positions 46–56 are enriched in polar residues; that stretch reads PNISDQQVSAL. Residue Tyr-111 is modified to Phosphotyrosine; by autocatalysis. Positions 115–136 are disordered; it reads KKRRHQQGQGDDSSHKKERKVY. The Bipartite nuclear localization signal signature appears at 117 to 134; sequence RRHQQGQGDDSSHKKERK. Tyr-140 is modified (phosphotyrosine; by autocatalysis). Residue Tyr-145 is modified to Phosphotyrosine. A Phosphotyrosine; by autocatalysis modification is found at Tyr-159. One can recognise a Protein kinase domain in the interval 159-479; that stretch reads YEIDSLIGKG…PYYALQHSFF (321 aa). An ATP-binding site is contributed by 165-173; sequence IGKGSFGQV. A Phosphotyrosine; by autocatalysis modification is found at Tyr-177. Lys-188 is an ATP binding site. Tyr-219 bears the Phosphotyrosine; by autocatalysis mark. 238 to 241 is a binding site for ATP; sequence FEML. Asp-287 functions as the Proton acceptor in the catalytic mechanism. Residue Ser-310 is modified to Phosphoserine; by autocatalysis. Residues Tyr-319 and Tyr-321 each carry the phosphotyrosine; by autocatalysis modification. Thr-402 bears the Phosphothreonine; by autocatalysis mark. Residues 408–442 are disordered; that stretch reads TKDGKREYKPPGTRKLHNILGVETGGPGGRRAGES. At Tyr-449 the chain carries Phosphotyrosine; by autocatalysis. Over residues 485 to 501 the composition is skewed to polar residues; the sequence is EGTNTSNSVSTSPAMEQ. 3 disordered regions span residues 485–540, 596–679, and 744–763; these read EGTN…HSGG, NALH…GNQA, and DREE…VASS. Residues 502 to 525 show a composition bias toward low complexity; it reads SQSSGTTSSTSSSSGGSSGTSNSG. Residues Ser-529 and Ser-538 each carry the phosphoserine modification. Residues 595-625 form a histidine-rich domain (HRD) region; that stretch reads QNALHHHHGNSSHHHHHHHHHHHHHGQQALG. Residues 598 to 620 show a composition bias toward basic residues; it reads LHHHHGNSSHHHHHHHHHHHHHG. Polar residues predominate over residues 634–645; that stretch reads NSPTNSSSTQDS. A compositionally biased stretch (low complexity) spans 654 to 672; it reads SMTSLSSSTTSSSTSSSST. 2 positions are modified to phosphoserine: Ser-748 and Ser-758. The span at 754-763 shows a compositional bias: polar residues; it reads CVQQSPVASS.

The protein belongs to the protein kinase superfamily. CMGC Ser/Thr protein kinase family. MNB/DYRK subfamily. As to quaternary structure, interacts with RAD54L2/ARIP4. Interacts with CRY2. Interacts with RANBP9. Interacts with WDR68. Interacts with SIRT1. Post-translationally, can also autophosphorylate on serine and threonine residues (in vitro). Autophosphorylated on numerous tyrosine residues. In terms of tissue distribution, detected in brain (at protein level). Ubiquitous.

It localises to the nucleus speckle. The catalysed reaction is L-seryl-[protein] + ATP = O-phospho-L-seryl-[protein] + ADP + H(+). It catalyses the reaction L-threonyl-[protein] + ATP = O-phospho-L-threonyl-[protein] + ADP + H(+). It carries out the reaction L-tyrosyl-[protein] + ATP = O-phospho-L-tyrosyl-[protein] + ADP + H(+). The enzyme catalyses [DNA-directed RNA polymerase] + ATP = phospho-[DNA-directed RNA polymerase] + ADP + H(+). Its activity is regulated as follows. Inhibited by RANBP9. Inhibited by harmine, leucettamine B and leucettine L41. Dual-specificity kinase which possesses both serine/threonine and tyrosine kinase activities. Exhibits a substrate preference for proline at position P+1 and arginine at position P-3. Plays an important role in double-strand breaks (DSBs) repair following DNA damage. Mechanistically, phosphorylates RNF169 and increases its ability to block accumulation of TP53BP1 at the DSB sites thereby promoting homologous recombination repair (HRR). Also acts as a positive regulator of transcription by acting as a CTD kinase that mediates phosphorylation of the CTD (C-terminal domain) of the large subunit of RNA polymerase II (RNAP II) POLR2A. May play a role in a signaling pathway regulating nuclear functions of cell proliferation. Modulates alternative splicing by phosphorylating the splice factor SRSF6. Has pro-survival function and negatively regulates the apoptotic process. Promotes cell survival upon genotoxic stress through phosphorylation of SIRT1. This in turn inhibits p53/TP53 activity and apoptosis. Phosphorylates SEPTIN4, SEPTIN5 and SF3B1 at 'Thr-434'. The chain is Dual specificity tyrosine-phosphorylation-regulated kinase 1A (Dyrk1a) from Rattus norvegicus (Rat).